Here is a 136-residue protein sequence, read N- to C-terminus: Nucleoside diphosphate kinase (136 aa).

The ATP site is built by Lys-10, Phe-58, Arg-86, Thr-92, Arg-104, and Asn-114. The Pros-phosphohistidine intermediate role is filled by His-117.

Belongs to the NDK family. Homotetramer. Mg(2+) is required as a cofactor.

Its subcellular location is the cytoplasm. The catalysed reaction is a 2'-deoxyribonucleoside 5'-diphosphate + ATP = a 2'-deoxyribonucleoside 5'-triphosphate + ADP. The enzyme catalyses a ribonucleoside 5'-diphosphate + ATP = a ribonucleoside 5'-triphosphate + ADP. Functionally, major role in the synthesis of nucleoside triphosphates other than ATP. The ATP gamma phosphate is transferred to the NDP beta phosphate via a ping-pong mechanism, using a phosphorylated active-site intermediate. The protein is Nucleoside diphosphate kinase of Corynebacterium glutamicum (strain R).